Here is a 164-residue protein sequence, read N- to C-terminus: ATP synthase subunit b (164 aa).

Residues phenylalanine 12–glycine 32 form a helical membrane-spanning segment.

It belongs to the ATPase B chain family. As to quaternary structure, F-type ATPases have 2 components, F(1) - the catalytic core - and F(0) - the membrane proton channel. F(1) has five subunits: alpha(3), beta(3), gamma(1), delta(1), epsilon(1). F(0) has three main subunits: a(1), b(2) and c(10-14). The alpha and beta chains form an alternating ring which encloses part of the gamma chain. F(1) is attached to F(0) by a central stalk formed by the gamma and epsilon chains, while a peripheral stalk is formed by the delta and b chains.

The protein localises to the cell membrane. In terms of biological role, f(1)F(0) ATP synthase produces ATP from ADP in the presence of a proton or sodium gradient. F-type ATPases consist of two structural domains, F(1) containing the extramembraneous catalytic core and F(0) containing the membrane proton channel, linked together by a central stalk and a peripheral stalk. During catalysis, ATP synthesis in the catalytic domain of F(1) is coupled via a rotary mechanism of the central stalk subunits to proton translocation. Functionally, component of the F(0) channel, it forms part of the peripheral stalk, linking F(1) to F(0). The sequence is that of ATP synthase subunit b from Streptococcus equi subsp. zooepidemicus (strain MGCS10565).